A 342-amino-acid chain; its full sequence is Methyltransferase ungE' (342 aa).

Belongs to the methyltransferase superfamily.

The protein operates within secondary metabolite biosynthesis. In terms of biological role, methyltransferase; part of the gene cluster that mediates the biosynthesis of the unguisins, gamma-aminobutyric acid (GABA)-containing fungal cyclic heptapeptides with the amino acid sequence cyclo-(D-Ala1-D-Val2-L-Leu3-beta-MePhe4-D-Ala5-D-Trp6-GABA7) for unguisin H and cyclo-(D-Ala1-D-Ala2-L-Leu3-beta-MePhe4-D-Ala5-D-Trp6-GABA7) for unguisin I. Within the pathway, the methyltransferase ungE' is probably involved in the synthesis of the (2R,3R)-beta-methylphenylalanine residue incorporated by the module 4 of the nonribosomal peptide synthetase (NRPS) ungA'. The alanine racemase ungC' catalyzes the interconversion of L-alanine and D-alanine, providing the D-alanine which is accepted by the first adenylation domain of ungA'. UngA' is the main enzyme within the cluster which condenses the 7 residues using its respective 7 modules. The terminal condensation domain (Ct) is involved in cyclization with D-alanine and thereby releasing of unguisins H and I. Finally, the hydrolase ungD' catalyzes the hydrolysis between the D-tryptophan and GABA residues of unguisins H and I to produce the corresponding linear peptides. This chain is Methyltransferase ungE', found in Aspergillus campestris (strain IBT 28561).